Consider the following 188-residue polypeptide: Peptide deformylase (188 aa).

Fe cation contacts are provided by C109 and H152. E153 is a catalytic residue. H156 contributes to the Fe cation binding site.

It belongs to the polypeptide deformylase family. Fe(2+) is required as a cofactor.

It carries out the reaction N-terminal N-formyl-L-methionyl-[peptide] + H2O = N-terminal L-methionyl-[peptide] + formate. In terms of biological role, removes the formyl group from the N-terminal Met of newly synthesized proteins. Requires at least a dipeptide for an efficient rate of reaction. N-terminal L-methionine is a prerequisite for activity but the enzyme has broad specificity at other positions. In Chloroflexus aggregans (strain MD-66 / DSM 9485), this protein is Peptide deformylase.